Reading from the N-terminus, the 155-residue chain is Ribosome maturation factor RimP (155 aa).

This sequence belongs to the RimP family.

It is found in the cytoplasm. Its function is as follows. Required for maturation of 30S ribosomal subunits. This is Ribosome maturation factor RimP from Prochlorococcus marinus (strain AS9601).